Reading from the N-terminus, the 535-residue chain is Arginine-containing cyclodipeptide synthase anoA (535 aa).

The segment at 93–114 (LLSPPREPGPIDSETKTREKKS) is disordered. Positions 105-114 (SETKTREKKS) are enriched in basic and acidic residues. A Conserved DDXXE motif motif is present at residues 424–428 (DDIAE).

Belongs to the arginine-containing cyclodipeptide synthase family.

It carries out the reaction L-tryptophyl-tRNA(Trp) + L-arginyl-tRNA(Arg) = cyclo(L-arginyl-L-tryptophyl) + tRNA(Trp) + tRNA(Arg) + H(+). The protein operates within secondary metabolite biosynthesis. Its function is as follows. Arginine-containing cyclodipeptide synthase; part of the cluster that mediates the biosynthesis of a highly modified cyclo-arginine-tryptophan dipeptide (cRW). Within the pathway, AnoA acts as the scaffold-generating enzyme and is responsible for formation of the cyclo-Arg-Trp diketopiperazine (cRW) from L-arginyl-tRNA(Arg) + L-tryptophanyl-tRNA(Trp). Additional enzymes from the cluster then further modify the cyclo-Arg-Asp diketopiperazine (cRW) scaffold. The polypeptide is Arginine-containing cyclodipeptide synthase anoA (Aspergillus nomiae (Aspergillus nomius)).